The primary structure comprises 208 residues: UPF0637 protein BcerKBAB4_3786 (208 aa).

This sequence belongs to the UPF0637 family.

The polypeptide is UPF0637 protein BcerKBAB4_3786 (Bacillus mycoides (strain KBAB4) (Bacillus weihenstephanensis)).